Here is a 117-residue protein sequence, read N- to C-terminus: CUE domain-containing protein CUE4 (117 aa).

Residues 27–74 (QVPSRTVQDAKPAPSVATNDPSPEPVPSAPEERVARLNRHGSDRKRAV) form a disordered region. A Glycyl lysine isopeptide (Lys-Gly) (interchain with G-Cter in ubiquitin) cross-link involves residue Lys-37. A Phosphoserine modification is found at Ser-48. Positions 56–74 (PEERVARLNRHGSDRKRAV) are enriched in basic and acidic residues. In terms of domain architecture, CUE spans 74–116 (VNSDMVEIVMTMAPHVPQEKVVQDLRNTGSIEHTMENIFAGKL).

In terms of processing, ubiquitinated.

Its subcellular location is the cytoplasm. The protein resides in the endoplasmic reticulum. The protein is CUE domain-containing protein CUE4 (CUE4) of Saccharomyces cerevisiae (strain ATCC 204508 / S288c) (Baker's yeast).